The primary structure comprises 448 residues: Glutamyl-tRNA reductase (448 aa).

Residues 49 to 52 (TCNR), Ser-109, 114 to 116 (ETQ), and Gln-120 each bind substrate. The active-site Nucleophile is Cys-50. Residue 189–194 (GAGEMS) participates in NADP(+) binding.

The protein belongs to the glutamyl-tRNA reductase family. In terms of assembly, homodimer.

The enzyme catalyses (S)-4-amino-5-oxopentanoate + tRNA(Glu) + NADP(+) = L-glutamyl-tRNA(Glu) + NADPH + H(+). It participates in porphyrin-containing compound metabolism; protoporphyrin-IX biosynthesis; 5-aminolevulinate from L-glutamyl-tRNA(Glu): step 1/2. Its function is as follows. Catalyzes the NADPH-dependent reduction of glutamyl-tRNA(Glu) to glutamate 1-semialdehyde (GSA). The sequence is that of Glutamyl-tRNA reductase from Staphylococcus aureus (strain bovine RF122 / ET3-1).